Reading from the N-terminus, the 953-residue chain is Isoleucine--tRNA ligase (953 aa).

The 'HIGH' region signature appears at 61-71 (PYANGALHIGH). Glutamate 564 lines the L-isoleucyl-5'-AMP pocket. Residues 605–609 (KMSKS) carry the 'KMSKS' region motif. Lysine 608 lines the ATP pocket. Residues cysteine 922, cysteine 925, cysteine 942, and cysteine 945 each contribute to the Zn(2+) site.

The protein belongs to the class-I aminoacyl-tRNA synthetase family. IleS type 1 subfamily. As to quaternary structure, monomer. Zn(2+) is required as a cofactor.

Its subcellular location is the cytoplasm. The enzyme catalyses tRNA(Ile) + L-isoleucine + ATP = L-isoleucyl-tRNA(Ile) + AMP + diphosphate. Catalyzes the attachment of isoleucine to tRNA(Ile). As IleRS can inadvertently accommodate and process structurally similar amino acids such as valine, to avoid such errors it has two additional distinct tRNA(Ile)-dependent editing activities. One activity is designated as 'pretransfer' editing and involves the hydrolysis of activated Val-AMP. The other activity is designated 'posttransfer' editing and involves deacylation of mischarged Val-tRNA(Ile). The polypeptide is Isoleucine--tRNA ligase (Thermosynechococcus vestitus (strain NIES-2133 / IAM M-273 / BP-1)).